A 1613-amino-acid chain; its full sequence is NAD-specific glutamate dehydrogenase (1613 aa).

The active site involves K849.

The protein belongs to the Glu/Leu/Phe/Val dehydrogenases family.

It catalyses the reaction L-glutamate + NAD(+) + H2O = 2-oxoglutarate + NH4(+) + NADH + H(+). Functionally, involved in arginine catabolism by converting L-glutamate, into 2-oxoglutarate, which is then channeled into the tricarboxylic acid cycle. The sequence is that of NAD-specific glutamate dehydrogenase from Halomonas elongata (strain ATCC 33173 / DSM 2581 / NBRC 15536 / NCIMB 2198 / 1H9).